We begin with the raw amino-acid sequence, 822 residues long: Outer dense fiber protein 2 (822 aa).

Residues 26–45 (KGQKTTPAKCQQKHKQKMKG) form a disordered region. Coiled-coil stretches lie at residues 113-418 (CKMN…EECA), 452-490 (DKSD…ALMD), and 516-796 (MEEK…NYVQ).

The protein belongs to the ODF2 family. In terms of assembly, self-associates. Associates with microtubules and forms a fibrillar structure partially linked to the microtubule network.

It is found in the cytoplasm. Its subcellular location is the cytoskeleton. It localises to the microtubule organizing center. The protein localises to the centrosome. The protein resides in the cell projection. It is found in the cilium. Its subcellular location is the centriole. It localises to the spindle pole. The protein localises to the flagellum. Seems to be a major component of sperm tail outer dense fibers (ODF). ODFs are filamentous structures located on the outside of the axoneme in the midpiece and principal piece of the mammalian sperm tail and may help to maintain the passive elastic structures and elastic recoil of the sperm tail. This is Outer dense fiber protein 2 (ODF2) from Gallus gallus (Chicken).